We begin with the raw amino-acid sequence, 386 residues long: MNIHEYQAKEILRKYGVPTSTGLVVTKTEKINETIDKLNTEVYVVKAQIHAGGRGKAGGVKVVKSKEEAKKVAHDMFGINLVTHQTGPQGQKVNRLYIESGCDILKEYYFSIVFDRSASCITFIASTEGGIDIEAVAEKTPDKIIKFSVDPATGLQDFHMRGIAYELGFKDNQAKQMKEIVKSVYNAFIETDATQIEINPLIVNSDGNLLALDAKITFDDNGLFRHPNITAMRDHDEEDPLETRAANAGLSYVKMDGNIGCMVNGAGLAMATMDIIKLYGASPANFLDVGGGADRERVKEALKIILSDKEVQGILVNIFGGIMRCDIIAEGIIAAAKDIGIKVPLVVRLAGTNVEKGEEILSNSGLAIIPAHDLADAANKIVEAIR.

Residues 9–244 (KEILRKYGVP…HDEEDPLETR (236 aa)) form the ATP-grasp domain. ATP is bound by residues K46, 53–55 (GRG), E99, C102, and E107. N199 and D213 together coordinate Mg(2+). Residues N264 and 321–323 (GIM) each bind substrate.

It belongs to the succinate/malate CoA ligase beta subunit family. Heterotetramer of two alpha and two beta subunits. Requires Mg(2+) as cofactor.

It carries out the reaction succinate + ATP + CoA = succinyl-CoA + ADP + phosphate. The enzyme catalyses GTP + succinate + CoA = succinyl-CoA + GDP + phosphate. Its pathway is carbohydrate metabolism; tricarboxylic acid cycle; succinate from succinyl-CoA (ligase route): step 1/1. Succinyl-CoA synthetase functions in the citric acid cycle (TCA), coupling the hydrolysis of succinyl-CoA to the synthesis of either ATP or GTP and thus represents the only step of substrate-level phosphorylation in the TCA. The beta subunit provides nucleotide specificity of the enzyme and binds the substrate succinate, while the binding sites for coenzyme A and phosphate are found in the alpha subunit. The protein is Succinate--CoA ligase [ADP-forming] subunit beta of Rickettsia conorii (strain ATCC VR-613 / Malish 7).